The sequence spans 526 residues: Bifunctional purine biosynthesis protein PurH (526 aa).

The region spanning 1–149 (MLHSLPIRRA…KNHEAVTVVV (149 aa)) is the MGS-like domain.

The protein belongs to the PurH family.

The catalysed reaction is (6R)-10-formyltetrahydrofolate + 5-amino-1-(5-phospho-beta-D-ribosyl)imidazole-4-carboxamide = 5-formamido-1-(5-phospho-D-ribosyl)imidazole-4-carboxamide + (6S)-5,6,7,8-tetrahydrofolate. The enzyme catalyses IMP + H2O = 5-formamido-1-(5-phospho-D-ribosyl)imidazole-4-carboxamide. The protein operates within purine metabolism; IMP biosynthesis via de novo pathway; 5-formamido-1-(5-phospho-D-ribosyl)imidazole-4-carboxamide from 5-amino-1-(5-phospho-D-ribosyl)imidazole-4-carboxamide (10-formyl THF route): step 1/1. Its pathway is purine metabolism; IMP biosynthesis via de novo pathway; IMP from 5-formamido-1-(5-phospho-D-ribosyl)imidazole-4-carboxamide: step 1/1. This is Bifunctional purine biosynthesis protein PurH from Rhodospirillum rubrum (strain ATCC 11170 / ATH 1.1.1 / DSM 467 / LMG 4362 / NCIMB 8255 / S1).